A 242-amino-acid polypeptide reads, in one-letter code: RNA polymerase sigma factor for flagellar operon (242 aa).

The Polymerase core binding motif lies at 55 to 68 (DMQQIGLIALVEAG). Residues 211-230 (LHEIALVLDLTPPRICQLHK) constitute a DNA-binding region (H-T-H motif).

The protein belongs to the sigma-70 factor family.

Sigma factors are initiation factors that promote the attachment of RNA polymerase to specific initiation sites and are then released. This alternative sigma factor is specific for the flagellin gene (fliC) expression. This is RNA polymerase sigma factor for flagellar operon (lafS) from Vibrio parahaemolyticus serotype O3:K6 (strain RIMD 2210633).